Consider the following 155-residue polypeptide: Ribonuclease H (155 aa).

The RNase H type-1 domain maps to 9-150 (DGQQVEMWTD…ADALANQGVE (142 aa)). Positions 18, 56, 78, and 142 each coordinate Mg(2+).

It belongs to the RNase H family. As to quaternary structure, monomer. Mg(2+) is required as a cofactor.

The protein resides in the cytoplasm. The catalysed reaction is Endonucleolytic cleavage to 5'-phosphomonoester.. In terms of biological role, endonuclease that specifically degrades the RNA of RNA-DNA hybrids. The chain is Ribonuclease H from Bordetella bronchiseptica (strain ATCC BAA-588 / NCTC 13252 / RB50) (Alcaligenes bronchisepticus).